A 224-amino-acid polypeptide reads, in one-letter code: Holliday junction branch migration complex subunit RuvA (224 aa).

The tract at residues 1-64 (MIGKVAGILD…EDLLQLFGFP (64 aa)) is domain I. The segment at 65–143 (TMIEKEWHRL…ALMAMGGGTA (79 aa)) is domain II. A disordered region spans residues 141–185 (GTAALAPSEPPEPQPGTSSGSRRKTRAPEPPRPSHTADALSALAN). The interval 144–170 (ALAPSEPPEPQPGTSSGSRRKTRAPEP) is flexible linker. A domain III region spans residues 171–224 (PRPSHTADALSALANLGYQPTDAAQAVAQAAGESPDADTAALIRAALKLLAPKS).

This sequence belongs to the RuvA family. As to quaternary structure, homotetramer. Forms an RuvA(8)-RuvB(12)-Holliday junction (HJ) complex. HJ DNA is sandwiched between 2 RuvA tetramers; dsDNA enters through RuvA and exits via RuvB. An RuvB hexamer assembles on each DNA strand where it exits the tetramer. Each RuvB hexamer is contacted by two RuvA subunits (via domain III) on 2 adjacent RuvB subunits; this complex drives branch migration. In the full resolvosome a probable DNA-RuvA(4)-RuvB(12)-RuvC(2) complex forms which resolves the HJ.

It localises to the cytoplasm. The RuvA-RuvB-RuvC complex processes Holliday junction (HJ) DNA during genetic recombination and DNA repair, while the RuvA-RuvB complex plays an important role in the rescue of blocked DNA replication forks via replication fork reversal (RFR). RuvA specifically binds to HJ cruciform DNA, conferring on it an open structure. The RuvB hexamer acts as an ATP-dependent pump, pulling dsDNA into and through the RuvAB complex. HJ branch migration allows RuvC to scan DNA until it finds its consensus sequence, where it cleaves and resolves the cruciform DNA. The sequence is that of Holliday junction branch migration complex subunit RuvA from Cereibacter sphaeroides (strain KD131 / KCTC 12085) (Rhodobacter sphaeroides).